The following is a 67-amino-acid chain: DNA-directed RNA polymerase subunit omega (67 aa).

Belongs to the RNA polymerase subunit omega family. As to quaternary structure, the RNAP catalytic core consists of 2 alpha, 1 beta, 1 beta' and 1 omega subunit. When a sigma factor is associated with the core the holoenzyme is formed, which can initiate transcription.

The enzyme catalyses RNA(n) + a ribonucleoside 5'-triphosphate = RNA(n+1) + diphosphate. Promotes RNA polymerase assembly. Latches the N- and C-terminal regions of the beta' subunit thereby facilitating its interaction with the beta and alpha subunits. This chain is DNA-directed RNA polymerase subunit omega, found in Nitrosomonas eutropha (strain DSM 101675 / C91 / Nm57).